A 394-amino-acid chain; its full sequence is Elongation factor Tu (394 aa).

The 196-residue stretch at 10 to 205 (KPHVNIGTIG…VDTWIPLPPR (196 aa)) folds into the tr-type G domain. The interval 19–26 (GHVDHGKT) is G1. Residue 19 to 26 (GHVDHGKT) participates in GTP binding. Thr-26 serves as a coordination point for Mg(2+). The interval 60-64 (GITIN) is G2. Residues 81-84 (DCPG) form a G3 region. GTP-binding positions include 81–85 (DCPGH) and 136–139 (NKCD). The interval 136–139 (NKCD) is G4. The interval 174-176 (SAL) is G5.

This sequence belongs to the TRAFAC class translation factor GTPase superfamily. Classic translation factor GTPase family. EF-Tu/EF-1A subfamily. As to quaternary structure, monomer.

The protein localises to the cytoplasm. It carries out the reaction GTP + H2O = GDP + phosphate + H(+). Functionally, GTP hydrolase that promotes the GTP-dependent binding of aminoacyl-tRNA to the A-site of ribosomes during protein biosynthesis. In Phocaeicola vulgatus (strain ATCC 8482 / DSM 1447 / JCM 5826 / CCUG 4940 / NBRC 14291 / NCTC 11154) (Bacteroides vulgatus), this protein is Elongation factor Tu.